The primary structure comprises 459 residues: Arginine biosynthesis bifunctional protein ArgJ, mitochondrial (459 aa).

Residues Thr187, Lys216, Thr227, Glu314, Asn454, and Thr459 each coordinate substrate. The active-site Nucleophile is Thr227.

The protein belongs to the ArgJ family. As to quaternary structure, heterodimer of an alpha and a beta chain. The alpha and beta chains are autoproteolytically processed from a single precursor protein within the mitochondrion.

The protein localises to the mitochondrion matrix. It carries out the reaction N(2)-acetyl-L-ornithine + L-glutamate = N-acetyl-L-glutamate + L-ornithine. It catalyses the reaction L-glutamate + acetyl-CoA = N-acetyl-L-glutamate + CoA + H(+). It functions in the pathway amino-acid biosynthesis; L-arginine biosynthesis; L-ornithine and N-acetyl-L-glutamate from L-glutamate and N(2)-acetyl-L-ornithine (cyclic): step 1/1. Its pathway is amino-acid biosynthesis; L-arginine biosynthesis; N(2)-acetyl-L-ornithine from L-glutamate: step 1/4. Catalyzes two activities which are involved in the cyclic version of arginine biosynthesis: the synthesis of acetylglutamate from glutamate and acetyl-CoA, and of ornithine by transacetylation between acetylornithine and glutamate. The polypeptide is Arginine biosynthesis bifunctional protein ArgJ, mitochondrial (Uncinocarpus reesii (strain UAMH 1704)).